The following is a 517-amino-acid chain: 2,3-bisphosphoglycerate-independent phosphoglycerate mutase (517 aa).

Asp14 and Ser64 together coordinate Mn(2+). Ser64 functions as the Phosphoserine intermediate in the catalytic mechanism. Substrate-binding positions include His125, 155–156 (RD), Arg187, Arg193, 263–266 (RSDR), and Lys337. Residues Asp404, His408, Asp445, His446, and His464 each coordinate Mn(2+).

The protein belongs to the BPG-independent phosphoglycerate mutase family. As to quaternary structure, monomer. It depends on Mn(2+) as a cofactor.

It catalyses the reaction (2R)-2-phosphoglycerate = (2R)-3-phosphoglycerate. The protein operates within carbohydrate degradation; glycolysis; pyruvate from D-glyceraldehyde 3-phosphate: step 3/5. Its function is as follows. Catalyzes the interconversion of 2-phosphoglycerate and 3-phosphoglycerate. The chain is 2,3-bisphosphoglycerate-independent phosphoglycerate mutase from Nitrosococcus oceani (strain ATCC 19707 / BCRC 17464 / JCM 30415 / NCIMB 11848 / C-107).